Consider the following 800-residue polypeptide: Phenylalanine--tRNA ligase beta subunit (800 aa).

The region spanning 39–154 (TKDIKNLVVG…ESQVPGTDAL (116 aa)) is the tRNA-binding domain. The B5 domain occupies 408 to 483 (AFITPIDITA…RIYGYDDIPS (76 aa)). Mg(2+)-binding residues include D461, D467, E470, and E471. The region spanning 708–800 (PRFPGMSRDI…ALIEQGAVIR (93 aa)) is the FDX-ACB domain.

The protein belongs to the phenylalanyl-tRNA synthetase beta subunit family. Type 1 subfamily. Tetramer of two alpha and two beta subunits. Mg(2+) serves as cofactor.

Its subcellular location is the cytoplasm. It catalyses the reaction tRNA(Phe) + L-phenylalanine + ATP = L-phenylalanyl-tRNA(Phe) + AMP + diphosphate + H(+). The sequence is that of Phenylalanine--tRNA ligase beta subunit from Staphylococcus aureus.